Consider the following 218-residue polypeptide: Superoxide dismutase [Mn], mitochondrial (218 aa).

Residues His27, His84, Asp174, and His178 each contribute to the Mn(2+) site.

Belongs to the iron/manganese superoxide dismutase family. As to quaternary structure, homotetramer. It depends on Mn(2+) as a cofactor.

It localises to the mitochondrion matrix. It catalyses the reaction 2 superoxide + 2 H(+) = H2O2 + O2. In terms of biological role, destroys superoxide anion radicals which are normally produced within the cells and which are toxic to biological systems. The protein is Superoxide dismutase [Mn], mitochondrial (SODA) of Chlamydomonas reinhardtii (Chlamydomonas smithii).